Here is a 70-residue protein sequence, read N- to C-terminus: DNA-directed RNA polymerase subunit omega (70 aa).

The protein belongs to the RNA polymerase subunit omega family. The RNAP catalytic core consists of 2 alpha, 1 beta, 1 beta' and 1 omega subunit. When a sigma factor is associated with the core the holoenzyme is formed, which can initiate transcription.

The catalysed reaction is RNA(n) + a ribonucleoside 5'-triphosphate = RNA(n+1) + diphosphate. Functionally, promotes RNA polymerase assembly. Latches the N- and C-terminal regions of the beta' subunit thereby facilitating its interaction with the beta and alpha subunits. This Bacillus mycoides (strain KBAB4) (Bacillus weihenstephanensis) protein is DNA-directed RNA polymerase subunit omega.